Here is a 550-residue protein sequence, read N- to C-terminus: Sterol O-acyltransferase 1 (550 aa).

Met-1 carries the N-acetylmethionine modification. The interval 1-36 is disordered; sequence MVGEEKMSLRNRLSKSRENPEEDEDQRKPAKESLEA. At 1–138 the chain is on the cytoplasmic side; it reads MVGEEKMSLR…LDELLEVDHI (138 aa). Residue Ser-8 is modified to Phosphoserine. A compositionally biased stretch (basic and acidic residues) spans 15-34; the sequence is KSRENPEEDEDQRKPAKESL. His-137 is a cholesterol binding site. Residues 139 to 160 form a helical membrane-spanning segment; sequence RTIYHMFIALLILFILSTLVVD. The Lumenal portion of the chain corresponds to 161-180; the sequence is YIDEGRLVLEFSLLSYAFGK. Residues 181–206 traverse the membrane as a helical segment; that stretch reads FPTVVWTWWIMFLSTFSVPYFLFQRW. At 207–218 the chain is on the cytoplasmic side; the sequence is ATGYSKSSHPLI. The helical transmembrane segment at 219–244 threads the bilayer; sequence NSLFHGFLFMVFQIGILGFGPTYVVL. The Lumenal portion of the chain corresponds to 245 to 252; it reads AYTLPPAS. A helical membrane pass occupies residues 253–276; that stretch reads RFIIIFEQIRFVMKAHSFVRENVP. Residues 277–319 lie on the Cytoplasmic side of the membrane; the sequence is RVLNSAKEKSSTVPIPTVNQYLYFLFAPTLIYRDSYPRNPTVR. A helical membrane pass occupies residues 320–352; the sequence is WGYVAMQFAQVFGCFFYVYYIFERLCAPLFRNI. Over 353-369 the chain is Lumenal; the sequence is KQEPFSARVLVLCVFNS. A helical transmembrane segment spans residues 370–395; that stretch reads ILPGVLILFLTFFAFLHCWLNAFAEM. Over 396–443 the chain is Cytoplasmic; it reads LRFGDRMFYKDWWNSTSYSNYYRTWNVVVHDWLYYYAYKDFLWFFSKR. The FYXDWWN motif motif lies at 403–409; that stretch reads FYKDWWN. Asn-415, Arg-418, Asn-421, His-425, Tyr-433, Lys-445, and Ser-456 together coordinate an acyl-CoA. Residues 444 to 468 traverse the membrane as a helical segment; that stretch reads FKSAAMLAAFAVSAVVHEYALAVCL. Residue His-460 is part of the active site. Residues 469-474 are Lumenal-facing; that stretch reads SFFYPV. The helical transmembrane segment at 475-490 threads the bilayer; sequence LFVLFMFFGMAFNFIV. The Cytoplasmic segment spans residues 491–496; sequence NDSRKK. The helical transmembrane segment at 497-528 threads the bilayer; that stretch reads PIWNVMMWTSLFLGNGVLLCFYSQEWYARQHC. Residues Cys-528 and Cys-546 are joined by a disulfide bond. At 529 to 550 the chain is on the lumenal side; the sequence is PLKNPTFLDYVRPRSWTCRYVF.

It belongs to the membrane-bound acyltransferase family. Sterol o-acyltransferase subfamily. In terms of assembly, may form homo- or heterodimers. Interacts with UBIAD1. Expressed in most tissues, but most strongly in the adrenal gland. Expressed more strongly in liver Kupffer cells than in hepatocytes.

The protein localises to the endoplasmic reticulum membrane. The enzyme catalyses a sterol + a long-chain fatty acyl-CoA = a long-chain 3-hydroxysterol ester + CoA. It catalyses the reaction cholesterol + an acyl-CoA = a cholesterol ester + CoA. The catalysed reaction is cholesterol + (9Z)-octadecenoyl-CoA = cholesteryl (9Z-octadecenoate) + CoA. It carries out the reaction cholesterol + hexadecanoyl-CoA = cholesteryl hexadecanoate + CoA. The enzyme catalyses octadecanoyl-CoA + cholesterol = cholesteryl octadecanoate + CoA. It catalyses the reaction (9Z,12Z)-octadecadienoyl-CoA + cholesterol = cholesteryl (9Z,12Z)-octadecadienoate + CoA. The catalysed reaction is (5Z,8Z,11Z,14Z)-eicosatetraenoyl-CoA + cholesterol = cholesteryl (5Z,8Z,11Z,14Z)-eicosatetraenoate + CoA. It carries out the reaction (9Z)-hexadecenoyl-CoA + cholesterol = cholesteryl (9Z)-hexadecenoate + CoA. The enzyme catalyses (11Z)-octadecenoyl-CoA + cholesterol = cholesteryl (11Z)-octadecenoate + CoA. It catalyses the reaction (7Z)-octadecenoyl-CoA + cholesterol = cholesteryl (7Z)-octadecenoate + CoA. Catalyzes the formation of fatty acid-cholesterol esters, which are less soluble in membranes than cholesterol. Plays a role in lipoprotein assembly and dietary cholesterol absorption. Preferentially utilizes oleoyl-CoA ((9Z)-octadecenoyl-CoA) as a substrate: shows a higher activity towards an acyl-CoA substrate with a double bond at the delta-9 position (9Z) than towards saturated acyl-CoA or an unsaturated acyl-CoA with a double bond at the delta-7 (7Z) or delta-11 (11Z) positions. This Macaca fascicularis (Crab-eating macaque) protein is Sterol O-acyltransferase 1 (SOAT1).